The following is a 117-amino-acid chain: Holo-[acyl-carrier-protein] synthase (117 aa).

The Mg(2+) site is built by D6 and E55.

It belongs to the P-Pant transferase superfamily. AcpS family. Requires Mg(2+) as cofactor.

The protein resides in the cytoplasm. The enzyme catalyses apo-[ACP] + CoA = holo-[ACP] + adenosine 3',5'-bisphosphate + H(+). Functionally, transfers the 4'-phosphopantetheine moiety from coenzyme A to a Ser of acyl-carrier-protein. In Chlorobaculum tepidum (strain ATCC 49652 / DSM 12025 / NBRC 103806 / TLS) (Chlorobium tepidum), this protein is Holo-[acyl-carrier-protein] synthase.